Reading from the N-terminus, the 495-residue chain is Trimethylamine methyltransferase MttB (495 aa).

A non-standard amino acid (pyrrolysine) is located at residue pyrrolysine 334.

It belongs to the trimethylamine methyltransferase family.

It carries out the reaction Co(I)-[trimethylamine-specific corrinoid protein] + trimethylamine + H(+) = methyl-Co(III)-[trimethylamine-specific corrinoid protein] + dimethylamine. It functions in the pathway one-carbon metabolism; methanogenesis from trimethylamine. Its function is as follows. Catalyzes the transfer of a methyl group from trimethylamine to the corrinoid cofactor of MttC. This is Trimethylamine methyltransferase MttB (mttB) from Methanosarcina barkeri (strain Fusaro / DSM 804).